We begin with the raw amino-acid sequence, 545 residues long: Squalene monooxygenase SE2 (545 aa).

Residues 12 to 32 (EYFLMFAATLLFGFVLYLFTL) form a helical membrane-spanning segment. FAD is bound by residues 86-87 (VA), 106-107 (ER), arginine 114, arginine 185, valine 201, aspartate 364, and methionine 377. The next 2 helical transmembrane spans lie at 475–495 (LFFHFFAVAIYGVGRLLIPFP) and 500–520 (MWLGARLISGASGIIFPIIKS).

This sequence belongs to the squalene monooxygenase family. The cofactor is FAD. In terms of tissue distribution, weak expression in petioles and flower buds and barely detectable in roots and leaves. In petioles, preferentially observed in vascular bundle tissue (phloem cells and parenchymatous cells near xylem) and resin ducts.

The protein localises to the membrane. It catalyses the reaction squalene + reduced [NADPH--hemoprotein reductase] + O2 = (S)-2,3-epoxysqualene + oxidized [NADPH--hemoprotein reductase] + H2O + H(+). It participates in terpene metabolism; lanosterol biosynthesis; lanosterol from farnesyl diphosphate: step 2/3. Functionally, component of the triterpene saponins (e.g. ginsenosides or panaxosides) and phytosterols biosynthetic pathways. Catalyzes the first oxygenation step in sterol biosynthesis and is suggested to be one of the rate-limiting enzymes in this pathway. The polypeptide is Squalene monooxygenase SE2 (Panax ginseng (Korean ginseng)).